A 398-amino-acid polypeptide reads, in one-letter code: Stomatin-like protein 1 (398 aa).

Positions 6–10 (GYRAL) match the Tyrosine-type lysosomal sorting signal motif. Serine 28 carries the phosphoserine modification. A helical; Signal-anchor for type III membrane protein membrane pass occupies residues 58–78 (LISFLGFLLLLVTFPISGWFA). Residues 79–398 (LKIVPTYERM…KLEAVLRALK (320 aa)) lie on the Cytoplasmic side of the membrane. Positions 287 to 398 (KQPLAEGLLT…KLEAVLRALK (112 aa)) constitute an SCP2 domain.

This sequence belongs to the band 7/mec-2 family. In terms of assembly, interacts with STOM; may redistribute STOM from the plasma membrane to late endosomes. Interacts with FBXW7 isoform 3 and CDK2. In terms of tissue distribution, ubiquitously expressed at low levels. Expression is highest in brain.

The protein localises to the membrane. It localises to the late endosome membrane. It is found in the membrane raft. Its subcellular location is the cell membrane. The protein resides in the cytoplasmic vesicle. In terms of biological role, may play a role in cholesterol transfer to late endosomes. May play a role in modulating membrane acid-sensing ion channels. Can specifically inhibit proton-gated current of ASIC1 isoform 1. Can increase inactivation speed of ASIC3. May be involved in regulation of proton sensing in dorsal root ganglions. May play a role in protecting FBXW7 isoform 3 from degradation. The protein is Stomatin-like protein 1 (STOML1) of Homo sapiens (Human).